Consider the following 105-residue polypeptide: Met repressor (105 aa).

It belongs to the MetJ family. Homodimer.

Its subcellular location is the cytoplasm. Its function is as follows. This regulatory protein, when combined with SAM (S-adenosylmethionine) represses the expression of the methionine regulon and of enzymes involved in SAM synthesis. This is Met repressor from Histophilus somni (strain 129Pt) (Haemophilus somnus).